The following is a 582-amino-acid chain: Tetratricopeptide repeat protein 24 (582 aa).

The tract at residues 1–31 is disordered; the sequence is MSSPNPEDVPRRPEPEPSSSNKKKKKRKWLR. TPR repeat units lie at residues 36-69, 79-112, 117-150, 154-187, 236-271, 273-306, 313-346, and 353-386; these read IQAL…ASKA, QACA…EKAQ, GDQC…YQPQ, GEAW…YAQE, GHLY…VPGE, ATVL…HGSV, GRSF…ARDS, and WQAC…CQKE. Disordered stretches follow at residues 418–481 and 548–582; these read TSAP…RAGP and VPNG…CTIV. Residues 441–454 show a composition bias toward polar residues; sequence GSSTAGVQHRSSSG. Basic and acidic residues predominate over residues 462–472; sequence EGHQKKKEERS.

The protein is Tetratricopeptide repeat protein 24 (TTC24) of Homo sapiens (Human).